The primary structure comprises 219 residues: Histone H1.4 (219 aa).

Positions 1–15 (MSETAPAAPAAPAPA) are enriched in low complexity. The segment at 1–41 (MSETAPAAPAAPAPAEKTPVKKKARKSAGAAKRKASGPPVS) is disordered. N-acetylserine is present on Ser-2. Ser-2 is subject to Phosphoserine. Residue Lys-17 is modified to N6-acetyllysine. Thr-18 is subject to Phosphothreonine. A compositionally biased stretch (basic residues) spans 20 to 35 (VKKKARKSAGAAKRKA). Residue Lys-26 is modified to N6-acetyllysine; alternate. Lys-26 is subject to N6-methyllysine; alternate. Lys-34 is subject to N6-(beta-hydroxybutyryl)lysine; alternate. Lys-34 carries the N6-succinyllysine; alternate modification. Position 36 is a phosphoserine (Ser-36). The region spanning 36–109 (SGPPVSELIT…GASGSFKLNK (74 aa)) is the H15 domain. Residue Lys-52 is modified to N6-(beta-hydroxybutyryl)lysine. Arg-54 is subject to Citrulline. 4 positions are modified to N6-(beta-hydroxybutyryl)lysine: Lys-64, Lys-85, Lys-90, and Lys-106. A disordered region spans residues 92–219 (TLVQTKGTGA…KPKKAAAKKK (128 aa)). Over residues 119 to 140 (KAKKAGAAKAKKPAGAAKKPKK) the composition is skewed to basic residues. Position 146 is a phosphothreonine (Thr-146). Composition is skewed to basic residues over residues 149-160 (KSAKKTPKKAKK) and 168-185 (KKAK…KKAP). ADP-ribosylserine is present on Ser-150. Ser-187 is modified (phosphoserine). Residues 192–219 (KAVKPKAAKPKTAKPKAAKPKKAAAKKK) are compositionally biased toward basic residues.

This sequence belongs to the histone H1/H5 family. Post-translationally, H1 histones are progressively phosphorylated during the cell cycle, becoming maximally phosphorylated during late G2 phase and M phase, and being dephosphorylated sharply thereafter. Acetylated at Lys-26. Deacetylated at Lys-26 by SIRT1. In terms of processing, citrullination at Arg-54 (H1R54ci) by PADI4 takes place within the DNA-binding site of H1 and results in its displacement from chromatin and global chromatin decondensation, thereby promoting pluripotency and stem cell maintenance. Post-translationally, ADP-ribosylated on Ser-150 in response to DNA damage.

It localises to the nucleus. Its subcellular location is the chromosome. Its function is as follows. Histone H1 protein binds to linker DNA between nucleosomes forming the macromolecular structure known as the chromatin fiber. Histones H1 are necessary for the condensation of nucleosome chains into higher-order structured fibers. Also acts as a regulator of individual gene transcription through chromatin remodeling, nucleosome spacing and DNA methylation. The chain is Histone H1.4 from Homo sapiens (Human).